The chain runs to 2108 residues: Kinesin-like protein KIF26B (2108 aa).

Disordered regions lie at residues 1–124 (MNSV…PGSD) and 263–287 (KHGS…PTHQ). Residues 40 to 50 (WYRKAYEESRA) are compositionally biased toward basic and acidic residues. Over residues 58–98 (GAGSALGSSGTPSPGSGTSSPSSFTGSPGPASPGIGTSSPG) the composition is skewed to low complexity. The span at 99–120 (SLGGSPGFGTGSPGSGSGGGSS) shows a compositional bias: gly residues. A Kinesin motor domain is found at 450–801 (KVKVMLRICS…IQIASRVLRM (352 aa)). Residue 546-553 (GHAKLGKS) coordinates ATP. Disordered stretches follow at residues 805–825 (KTKY…GRMR), 876–917 (SDKE…GKSE), 937–1166 (DGSE…ESKK), 1406–1504 (EPEA…PVTD), 1519–1653 (GLAT…SSSK), 1685–1799 (AESL…ASKL), and 1824–1974 (RAGP…WVDG). Residues 1004 to 1046 (SHSPVPAAAPAHSPSPASPRSVPGSSSQHSASPLVQSPSLQSS) show a composition bias toward low complexity. Basic and acidic residues predominate over residues 1424–1461 (RESKENSAKKEMKFEDPWLKREEEVKKETAHPNEEGMM). The segment covering 1491–1500 (SSSSGEVSAS) has biased composition (low complexity). 2 stretches are compositionally biased toward polar residues: residues 1521 to 1537 (ATQS…SSSL) and 1611 to 1628 (RASP…SPLN). Composition is skewed to low complexity over residues 1713–1730 (SAGT…AGQS) and 1751–1763 (STTK…TKSL). A compositionally biased stretch (polar residues) spans 1781–1795 (PWSTQSLSRNRSSGL). A compositionally biased stretch (low complexity) spans 1824-1836 (RAGPEAEARGGAL). Position 1855 is a phosphothreonine (T1855). 2 stretches are compositionally biased toward polar residues: residues 1866-1875 (GHGSDNSSVL) and 1907-1925 (ATGS…SSSV). Positions 1930 to 1948 (RSLKTPKKRSNPGSQRRRL) are enriched in basic residues. Residues 1954 to 1968 (LDTSSPVRKPPNSTG) show a composition bias toward polar residues. S1958 carries the phosphoserine modification.

It belongs to the TRAFAC class myosin-kinesin ATPase superfamily. Kinesin family. KIF26 subfamily. Interacts with MYH10. Post-translationally, phosphorylation at Thr-1855 and Ser-1958 by CDKs, mainly CDK2 and CDK5, enhances the interaction with NEDD4, polyubiquitination, and subsequent proteasomal degradation. Phosphorylation occurs upon loss of interaction with microtubules. Polyubiquitinated by NEDD4, resulting in proteasomal degradation.

It is found in the cytoplasm. The protein localises to the cytoskeleton. In terms of biological role, essential for embryonic kidney development. Plays an important role in the compact adhesion between mesenchymal cells adjacent to the ureteric buds, possibly by interacting with MYH10. This could lead to the establishment of the basolateral integrity of the mesenchyme and the polarized expression of ITGA8, which maintains the GDNF expression required for further ureteric bud attraction. Although it seems to lack ATPase activity it is constitutively associated with microtubules. The protein is Kinesin-like protein KIF26B (KIF26B) of Homo sapiens (Human).